Here is a 189-residue protein sequence, read N- to C-terminus: Probable nicotinate-nucleotide adenylyltransferase (189 aa).

It belongs to the NadD family.

It carries out the reaction nicotinate beta-D-ribonucleotide + ATP + H(+) = deamido-NAD(+) + diphosphate. The protein operates within cofactor biosynthesis; NAD(+) biosynthesis; deamido-NAD(+) from nicotinate D-ribonucleotide: step 1/1. In terms of biological role, catalyzes the reversible adenylation of nicotinate mononucleotide (NaMN) to nicotinic acid adenine dinucleotide (NaAD). The protein is Probable nicotinate-nucleotide adenylyltransferase of Bacillus anthracis (strain CDC 684 / NRRL 3495).